Reading from the N-terminus, the 223-residue chain is Sugar fermentation stimulation protein homolog (223 aa).

The protein belongs to the SfsA family.

The sequence is that of Sugar fermentation stimulation protein homolog from Thermosipho melanesiensis (strain DSM 12029 / CIP 104789 / BI429).